Here is a 214-residue protein sequence, read N- to C-terminus: UPF0690 protein C1orf52 homolog (214 aa).

2 disordered regions span residues 1–66 (MSDE…SVSK) and 81–214 (DSRA…QCLD). Residues 32-44 (PEATASSAPAEPQ) show a composition bias toward low complexity. Basic and acidic residues-rich tracts occupy residues 49 to 61 (RAAE…DELF) and 81 to 97 (DSRA…EFKV). The span at 152 to 165 (EEEEEEQQPDSDDD) shows a compositional bias: acidic residues. Ser-162 carries the phosphoserine modification. Composition is skewed to basic and acidic residues over residues 179-192 (VETF…KRDI) and 200-214 (NFVE…QCLD).

The protein belongs to the UPF0690 family.

In Danio rerio (Zebrafish), this protein is UPF0690 protein C1orf52 homolog.